The chain runs to 294 residues: Protease HtpX homolog (294 aa).

The next 2 helical transmembrane spans lie at 12 to 32 (VLFG…ASSF) and 34 to 54 (SPGV…YSYW). Residue histidine 138 participates in Zn(2+) binding. Glutamate 139 is a catalytic residue. Histidine 142 provides a ligand contact to Zn(2+). A run of 2 helical transmembrane segments spans residues 152–172 (SVAG…VFFG) and 188–208 (LALL…QLAI). Glutamate 213 lines the Zn(2+) pocket.

This sequence belongs to the peptidase M48B family. Zn(2+) serves as cofactor.

It localises to the cell membrane. This chain is Protease HtpX homolog, found in Kineococcus radiotolerans (strain ATCC BAA-149 / DSM 14245 / SRS30216).